The chain runs to 525 residues: D-arabinono-1,4-lactone oxidase (525 aa).

An FAD-binding PCMH-type domain is found at 20–195; sequence IYSSRPEWYF…VGATVRVVPA (176 aa). Residue His-58 is modified to Pros-8alpha-FAD histidine.

This sequence belongs to the oxygen-dependent FAD-linked oxidoreductase family. The cofactor is FAD.

The protein resides in the mitochondrion membrane. It catalyses the reaction D-arabinono-1,4-lactone + O2 = dehydro-D-arabinono-1,4-lactone + H2O2 + H(+). The protein operates within cofactor biosynthesis; D-erythroascorbate biosynthesis; dehydro-D-arabinono-1,4-lactone from D-arabinose: step 2/2. This is D-arabinono-1,4-lactone oxidase (ALO1) from Candida glabrata (strain ATCC 2001 / BCRC 20586 / JCM 3761 / NBRC 0622 / NRRL Y-65 / CBS 138) (Yeast).